We begin with the raw amino-acid sequence, 59 residues long: Potassium channel toxin alpha-KTx 3.10 (59 aa).

The first 22 residues, 1–22 (MKVFFAVLIALFVCSMVIGIHG), serve as a signal peptide directing secretion. 3 disulfides stabilise this stretch: Cys-30-Cys-50, Cys-36-Cys-55, and Cys-40-Cys-57.

The protein belongs to the short scorpion toxin superfamily. Potassium channel inhibitor family. Alpha-KTx 03 subfamily. Expressed by the venom gland.

Its subcellular location is the secreted. Its function is as follows. Inhibits insect potassium channel. Is at least a 100-fold more potent against the Drosophila Shaker channel than towards its mammalian homologs Kv1.1/KCNA1 and Kv1.3/KCNA3. The polypeptide is Potassium channel toxin alpha-KTx 3.10 (Buthus israelis (Israeli scorpion)).